A 593-amino-acid chain; its full sequence is Thiol:disulfide interchange protein DsbD (593 aa).

Positions 1–21 (MRALLTFFVAGLLVLSSPAMA) are cleaved as a signal peptide. Cystine bridges form between C130–C136 and C207–C328. The next 8 helical transmembrane spans lie at 193–215 (LLFLALGVGLAFTPCVLPMYPIL), 235–257 (LVYVQGMALTYTLLGLVVASAGL), 269–291 (LIGLSILFVTLALSMFGVYTLQL), 318–340 (GAISGLVCSPCTTAPLSGALLYV), 347–369 (LTGGVALYALAMGMGIPLILVAV), 384–401 (RVKTLFGFVLLAAPIFLL), 408–425 (MWSTALWSALGIAAFGWL), and 440–462 (SAVGIIAVLGLFASAQPALNYWF). One can recognise a Thioredoxin domain in the interval 451–593 (FASAQPALNY…FLEHIQRISN (143 aa)). C508 and C511 are joined by a disulfide.

It belongs to the thioredoxin family. DsbD subfamily.

The protein resides in the cell inner membrane. The enzyme catalyses [protein]-dithiol + NAD(+) = [protein]-disulfide + NADH + H(+). It carries out the reaction [protein]-dithiol + NADP(+) = [protein]-disulfide + NADPH + H(+). In terms of biological role, required to facilitate the formation of correct disulfide bonds in some periplasmic proteins and for the assembly of the periplasmic c-type cytochromes. Acts by transferring electrons from cytoplasmic thioredoxin to the periplasm. This transfer involves a cascade of disulfide bond formation and reduction steps. The protein is Thiol:disulfide interchange protein DsbD of Vibrio vulnificus (strain CMCP6).